A 515-amino-acid polypeptide reads, in one-letter code: Fatty acyl-CoA reductase 1 (515 aa).

Topologically, residues 1–465 (MVSIPEYYEG…ARKHLNKLRN (465 aa)) are cytoplasmic. The necessary and sufficient for PEX19-mediated localization into peroxisome membrane stretch occupies residues 451-507 (SGLPAARKHLNKLRNIRYGFNTILVILIWRIFIARSQMARNIWYFVVSLCYKFLSYF). The chain crosses the membrane as a helical span at residues 466-483 (IRYGFNTILVILIWRIFI). Over 484 to 515 (ARSQMARNIWYFVVSLCYKFLSYFRASSTMRY) the chain is Peroxisomal.

It belongs to the fatty acyl-CoA reductase family. Interacts with PEX19; PEX19 mediates the targeting of FAR1 to peroxisomes.

Its subcellular location is the peroxisome membrane. The catalysed reaction is a long-chain fatty acyl-CoA + 2 NADPH + 2 H(+) = a long-chain primary fatty alcohol + 2 NADP(+) + CoA. It carries out the reaction hexadecanoyl-CoA + 2 NADPH + 2 H(+) = hexadecan-1-ol + 2 NADP(+) + CoA. It catalyses the reaction octadecanoyl-CoA + 2 NADPH + 2 H(+) = octadecan-1-ol + 2 NADP(+) + CoA. The enzyme catalyses eicosanoyl-CoA + 2 NADPH + 2 H(+) = eicosan-1-ol + 2 NADP(+) + CoA. The catalysed reaction is (9Z)-octadecenoyl-CoA + 2 NADPH + 2 H(+) = (9Z)-octadecen-1-ol + 2 NADP(+) + CoA. It carries out the reaction (9Z,12Z)-octadecadienoyl-CoA + 2 NADPH + 2 H(+) = (9Z,12Z)-octadecadien-1-ol + 2 NADP(+) + CoA. It catalyses the reaction 16-methylheptadecanoyl-CoA + 2 NADPH + 2 H(+) = 16-methylheptadecan-1-ol + 2 NADP(+) + CoA. The enzyme catalyses 18-methylnonadecanoyl-CoA + 2 NADPH + 2 H(+) = 18-methylnonadecan-1-ol + 2 NADP(+) + CoA. In terms of biological role, catalyzes the reduction of saturated and unsaturated C16 or C18 fatty acyl-CoA to fatty alcohols. It plays an essential role in the production of ether lipids/plasmalogens which synthesis requires fatty alcohols. In parallel, it is also required for wax monoesters production since fatty alcohols also constitute a substrate for their synthesis. The chain is Fatty acyl-CoA reductase 1 from Homo sapiens (Human).